Reading from the N-terminus, the 222-residue chain is Protein DEHYDRATION-INDUCED 19 homolog 6 (222 aa).

A Phosphoserine modification is found at serine 116.

It belongs to the Di19 family. Phosphorylated in vitro by CPK3 or CPK11. As to expression, expressed in seedlings, roots, leaves, stems, flowers and siliques.

It is found in the nucleus. This Arabidopsis thaliana (Mouse-ear cress) protein is Protein DEHYDRATION-INDUCED 19 homolog 6 (DI19-6).